The chain runs to 115 residues: NAD(P)H-quinone oxidoreductase subunit M, organellar chromatophore (115 aa).

Belongs to the complex I NdhM subunit family. In terms of assembly, NDH-1 can be composed of about 15 different subunits; different subcomplexes with different compositions have been identified which probably have different functions.

Its subcellular location is the plastid. The protein resides in the organellar chromatophore thylakoid membrane. The enzyme catalyses a plastoquinone + NADH + (n+1) H(+)(in) = a plastoquinol + NAD(+) + n H(+)(out). The catalysed reaction is a plastoquinone + NADPH + (n+1) H(+)(in) = a plastoquinol + NADP(+) + n H(+)(out). In terms of biological role, NDH-1 shuttles electrons from an unknown electron donor, via FMN and iron-sulfur (Fe-S) centers, to quinones in the respiratory and/or the photosynthetic chain. The immediate electron acceptor for the enzyme in this species is believed to be plastoquinone. Couples the redox reaction to proton translocation, and thus conserves the redox energy in a proton gradient. This is NAD(P)H-quinone oxidoreductase subunit M, organellar chromatophore from Paulinella chromatophora.